The sequence spans 96 residues: MPNHASAKKMVRVIGKRTLSNRVRKSRVRNSVKAFVAALEANSPIEDAIAAFRKAESNIHKCVNKGVFHRNTAARKISALSGKLKAYDLARLQNEQ.

It belongs to the bacterial ribosomal protein bS20 family.

Its function is as follows. Binds directly to 16S ribosomal RNA. The chain is Small ribosomal subunit protein bS20 from Anaplasma phagocytophilum (strain HZ).